The sequence spans 202 residues: Snake venom metalloproteinase atroxlysin-1 (202 aa).

A Peptidase M12B domain is found at 6–202 (RYVDLFIVVD…ENPQCILNKR (197 aa)). Aspartate 9 and aspartate 93 together coordinate Ca(2+). 3 cysteine pairs are disulfide-bonded: cysteine 117–cysteine 197, cysteine 157–cysteine 181, and cysteine 159–cysteine 164. Histidine 142 serves as a coordination point for Zn(2+). Glutamate 143 is an active-site residue. The Zn(2+) site is built by histidine 146 and histidine 152. 2 residues coordinate Ca(2+): cysteine 197 and asparagine 200.

The protein belongs to the venom metalloproteinase (M12B) family. P-I subfamily. Monomer. Requires Zn(2+) as cofactor. As to expression, expressed by the venom gland.

Its subcellular location is the secreted. With respect to regulation, inhibited by EDTA, DTT and high concentrations of zinc ions (&gt;2 mM). Weakly inhibited by TLCK. Not inhibited by PMSF. Activated by calcium ions. Snake venom zinc metalloproteinase that acts on fibrinogen, fibrin, fibronectin (FN1), type I collagen, type IV collagen, integrin alpha-7/beta-1 (ITGA7/ITGB1) and integrin alpha-1/beta-1 (ITGA1/ITGB1). Binds to fibronectin (FN1), fibrinogen and, weakly, to type I collagen and laminin. Cleaves Xaa-Leu bonds. Inhibits ADP- and collagen-induced platelet aggregation both in the presence (IC(50)=1.4 uM for collagen) and in the absence (IC(50)=2.2 uM for collagen) of cofactors. Has hemorrhagic activity. This chain is Snake venom metalloproteinase atroxlysin-1, found in Bothrops atrox (Barba amarilla).